A 543-amino-acid chain; its full sequence is Cytochrome P450 monooxygenase 205 (543 aa).

Residues 9-29 (LISLGVAALAVAVWKAIVMVI) form a helical membrane-spanning segment. N-linked (GlcNAc...) asparagine glycans are attached at residues Asn332 and Asn434. A heme-binding site is contributed by Cys479.

It belongs to the cytochrome P450 family. It depends on heme as a cofactor.

It is found in the membrane. It participates in secondary metabolite biosynthesis. Cytochrome P450 monooxygenase that is able to use carbazole and phenanthrene as substrates for oxidation. This is Cytochrome P450 monooxygenase 205 from Postia placenta (strain ATCC 44394 / Madison 698-R) (Brown rot fungus).